A 205-amino-acid chain; its full sequence is Large ribosomal subunit protein bL25 (205 aa).

Positions 185-205 (PAGAVSEAAEGGEAAGETPAA) are disordered. Over residues 186 to 205 (AGAVSEAAEGGEAAGETPAA) the composition is skewed to low complexity.

The protein belongs to the bacterial ribosomal protein bL25 family. CTC subfamily. In terms of assembly, part of the 50S ribosomal subunit; part of the 5S rRNA/L5/L18/L25 subcomplex. Contacts the 5S rRNA. Binds to the 5S rRNA independently of L5 and L18.

Its function is as follows. This is one of the proteins that binds to the 5S RNA in the ribosome where it forms part of the central protuberance. The chain is Large ribosomal subunit protein bL25 from Cupriavidus taiwanensis (strain DSM 17343 / BCRC 17206 / CCUG 44338 / CIP 107171 / LMG 19424 / R1) (Ralstonia taiwanensis (strain LMG 19424)).